Reading from the N-terminus, the 293-residue chain is Glutamyl-Q tRNA(Asp) synthetase (293 aa).

L-glutamate is bound by residues 8–12 and glutamate 44; that span reads RFAPT. A 'HIGH' region motif is present at residues 11 to 21; the sequence is PTPSGYLHFGS. Zn(2+)-binding residues include cysteine 100, cysteine 102, tyrosine 114, and cysteine 118. 2 residues coordinate L-glutamate: tyrosine 171 and arginine 189. A 'KMSKS' region motif is present at residues 227–231; it reads KLGKS. Lysine 230 is a binding site for ATP.

It belongs to the class-I aminoacyl-tRNA synthetase family. GluQ subfamily. Zn(2+) is required as a cofactor.

Its function is as follows. Catalyzes the tRNA-independent activation of glutamate in presence of ATP and the subsequent transfer of glutamate onto a tRNA(Asp). Glutamate is transferred on the 2-amino-5-(4,5-dihydroxy-2-cyclopenten-1-yl) moiety of the queuosine in the wobble position of the QUC anticodon. This is Glutamyl-Q tRNA(Asp) synthetase from Pseudomonas aeruginosa (strain ATCC 15692 / DSM 22644 / CIP 104116 / JCM 14847 / LMG 12228 / 1C / PRS 101 / PAO1).